The chain runs to 79 residues: Conotoxin TxMEKL-021 (79 aa).

The first 19 residues, 1–19 (MEKLTILLLVAVVLMSTQA), serve as a signal peptide directing secretion. Positions 20 to 47 (LPQGGGEKRPRENIRFLSKRKSNAERWR) are excised as a propeptide. Cystine bridges form between Cys51–Cys65, Cys58–Cys69, and Cys64–Cys75.

This sequence belongs to the conotoxin O2 superfamily. Expressed by the venom duct.

The protein localises to the secreted. The chain is Conotoxin TxMEKL-021 from Conus textile (Cloth-of-gold cone).